Reading from the N-terminus, the 550-residue chain is CTP synthase (550 aa).

The segment at Met1 to Leu265 is amidoligase domain. Ser13 provides a ligand contact to CTP. Residue Ser13 participates in UTP binding. Ser14–Ile19 provides a ligand contact to ATP. Residue Tyr54 coordinates L-glutamine. An ATP-binding site is contributed by Asp71. Positions 71 and 139 each coordinate Mg(2+). Residues Asp146–Glu148, Lys186–Gln191, and Lys222 each bind CTP. Residues Lys186–Gln191 and Lys222 each bind UTP. The Glutamine amidotransferase type-1 domain occupies Thr290–Arg541. Gly351 provides a ligand contact to L-glutamine. The Nucleophile; for glutamine hydrolysis role is filled by Cys378. Residues Leu379–Gln382, Glu402, and Arg469 contribute to the L-glutamine site. Catalysis depends on residues His514 and Glu516.

It belongs to the CTP synthase family. In terms of assembly, homotetramer.

The catalysed reaction is UTP + L-glutamine + ATP + H2O = CTP + L-glutamate + ADP + phosphate + 2 H(+). It catalyses the reaction L-glutamine + H2O = L-glutamate + NH4(+). It carries out the reaction UTP + NH4(+) + ATP = CTP + ADP + phosphate + 2 H(+). Its pathway is pyrimidine metabolism; CTP biosynthesis via de novo pathway; CTP from UDP: step 2/2. With respect to regulation, allosterically activated by GTP, when glutamine is the substrate; GTP has no effect on the reaction when ammonia is the substrate. The allosteric effector GTP functions by stabilizing the protein conformation that binds the tetrahedral intermediate(s) formed during glutamine hydrolysis. Inhibited by the product CTP, via allosteric rather than competitive inhibition. Its function is as follows. Catalyzes the ATP-dependent amination of UTP to CTP with either L-glutamine or ammonia as the source of nitrogen. Regulates intracellular CTP levels through interactions with the four ribonucleotide triphosphates. This chain is CTP synthase, found in Nitrosococcus oceani (strain ATCC 19707 / BCRC 17464 / JCM 30415 / NCIMB 11848 / C-107).